Consider the following 296-residue polypeptide: Giardin subunit alpha-4 (296 aa).

4 Annexin repeats span residues 3–72, 74–146, 153–223, and 226–294; these read ATVS…VHAW, SRFE…GWVK, KSIK…AHHW, and DPGQ…VFWR.

The protein belongs to the annexin family. Giardin subunit alpha subfamily.

The protein resides in the cytoplasm. It is found in the cytoskeleton. Functionally, giardins are involved in parasite attachment to the intestinal mucosa and in the cytoskeletal disassembly and reassembly that marks the transition from infectious trophozoite to transmissible cyst. They may interact with other cytoskeletal proteins such as microtubules in the microribbons or crossbridges, to maintain the integrity of the ventral disk. This chain is Giardin subunit alpha-4, found in Giardia intestinalis (Giardia lamblia).